Consider the following 116-residue polypeptide: NADPH-dependent 7-cyano-7-deazaguanine reductase (116 aa).

The Thioimide intermediate role is filled by Cys-31. Asp-38 acts as the Proton donor in catalysis. Substrate is bound by residues 53-55 and 72-73; these read IEL and YE.

It belongs to the GTP cyclohydrolase I family. QueF type 1 subfamily.

It localises to the cytoplasm. The catalysed reaction is 7-aminomethyl-7-carbaguanine + 2 NADP(+) = 7-cyano-7-deazaguanine + 2 NADPH + 3 H(+). The protein operates within tRNA modification; tRNA-queuosine biosynthesis. Catalyzes the NADPH-dependent reduction of 7-cyano-7-deazaguanine (preQ0) to 7-aminomethyl-7-deazaguanine (preQ1). This is NADPH-dependent 7-cyano-7-deazaguanine reductase from Chlorobaculum parvum (strain DSM 263 / NCIMB 8327) (Chlorobium vibrioforme subsp. thiosulfatophilum).